We begin with the raw amino-acid sequence, 510 residues long: GMP synthase [glutamine-hydrolyzing] (510 aa).

A Glutamine amidotransferase type-1 domain is found at 5 to 195; that stretch reads LVLVVDFGGQ…LFNVCNLKGD (191 aa). Cys-82 serves as the catalytic Nucleophile. Active-site residues include His-169 and Glu-171. Residues 196–385 form the GMPS ATP-PPase domain; sequence WSMSSFAEQQ…LGIPHKLVWR (190 aa). Residue 223 to 229 coordinates ATP; that stretch reads SGGVDSS.

Homodimer.

The enzyme catalyses XMP + L-glutamine + ATP + H2O = GMP + L-glutamate + AMP + diphosphate + 2 H(+). It functions in the pathway purine metabolism; GMP biosynthesis; GMP from XMP (L-Gln route): step 1/1. In terms of biological role, catalyzes the synthesis of GMP from XMP. This Clostridium botulinum (strain ATCC 19397 / Type A) protein is GMP synthase [glutamine-hydrolyzing].